Reading from the N-terminus, the 79-residue chain is Large ribosomal subunit protein uL24 (79 aa).

Belongs to the universal ribosomal protein uL24 family. Part of the 50S ribosomal subunit.

In terms of biological role, one of two assembly initiator proteins, it binds directly to the 5'-end of the 23S rRNA, where it nucleates assembly of the 50S subunit. Its function is as follows. One of the proteins that surrounds the polypeptide exit tunnel on the outside of the subunit. The polypeptide is Large ribosomal subunit protein uL24 (Lactobacillus delbrueckii subsp. bulgaricus (strain ATCC 11842 / DSM 20081 / BCRC 10696 / JCM 1002 / NBRC 13953 / NCIMB 11778 / NCTC 12712 / WDCM 00102 / Lb 14)).